Reading from the N-terminus, the 548-residue chain is DNA ligase (548 aa).

Glu244 contributes to the ATP binding site. Residue Lys246 is the N6-AMP-lysine intermediate of the active site. Positions 251, 266, 295, 334, 405, and 411 each coordinate ATP.

It belongs to the ATP-dependent DNA ligase family. Requires Mg(2+) as cofactor.

It catalyses the reaction ATP + (deoxyribonucleotide)n-3'-hydroxyl + 5'-phospho-(deoxyribonucleotide)m = (deoxyribonucleotide)n+m + AMP + diphosphate.. In terms of biological role, DNA ligase that seals nicks in double-stranded DNA during DNA replication, DNA recombination and DNA repair. The protein is DNA ligase of Methanoculleus marisnigri (strain ATCC 35101 / DSM 1498 / JR1).